A 383-amino-acid polypeptide reads, in one-letter code: L-lactate dehydrogenase (383 aa).

The FMN hydroxy acid dehydrogenase domain occupies 1–380 (MIIASTFDYR…TCESLVNTDA (380 aa)). Substrate is bound at residue Y24. Positions 106 and 127 each coordinate FMN. Y129 lines the substrate pocket. FMN is bound at residue T155. Substrate is bound at residue R164. K251 lines the FMN pocket. The active-site Proton acceptor is the H275. A substrate-binding site is contributed by R278. 306–330 (DSGVRSGLDVVRMIAQGADAVMIGR) contributes to the FMN binding site.

Belongs to the FMN-dependent alpha-hydroxy acid dehydrogenase family. FMN serves as cofactor.

It localises to the cell inner membrane. It catalyses the reaction (S)-lactate + A = pyruvate + AH2. Catalyzes the conversion of L-lactate to pyruvate. Is coupled to the respiratory chain. This Bartonella tribocorum (strain CIP 105476 / IBS 506) protein is L-lactate dehydrogenase.